The primary structure comprises 375 residues: Histidine biosynthesis bifunctional protein HisB (375 aa).

The segment at 1–168 (MTPILFVDRD…GIAHELADAP (168 aa)) is histidinol-phosphatase. Residue Asp8 is the Nucleophile of the active site. Residues Asp8, Asp10, and Asp128 each coordinate Mg(2+). The active-site Proton donor is Asp10. An imidazoleglycerol-phosphate dehydratase region spans residues 169–375 (RRAVVQRNTK…SALPTTKGAL (207 aa)).

This sequence in the N-terminal section; belongs to the histidinol-phosphatase family. In the C-terminal section; belongs to the imidazoleglycerol-phosphate dehydratase family. Mg(2+) is required as a cofactor.

Its subcellular location is the cytoplasm. It carries out the reaction D-erythro-1-(imidazol-4-yl)glycerol 3-phosphate = 3-(imidazol-4-yl)-2-oxopropyl phosphate + H2O. It catalyses the reaction L-histidinol phosphate + H2O = L-histidinol + phosphate. It participates in amino-acid biosynthesis; L-histidine biosynthesis; L-histidine from 5-phospho-alpha-D-ribose 1-diphosphate: step 6/9. Its pathway is amino-acid biosynthesis; L-histidine biosynthesis; L-histidine from 5-phospho-alpha-D-ribose 1-diphosphate: step 8/9. The sequence is that of Histidine biosynthesis bifunctional protein HisB from Xanthomonas oryzae pv. oryzae (strain MAFF 311018).